Consider the following 689-residue polypeptide: Glycine--tRNA ligase beta subunit (689 aa).

Belongs to the class-II aminoacyl-tRNA synthetase family. In terms of assembly, tetramer of two alpha and two beta subunits.

The protein resides in the cytoplasm. The enzyme catalyses tRNA(Gly) + glycine + ATP = glycyl-tRNA(Gly) + AMP + diphosphate. The chain is Glycine--tRNA ligase beta subunit from Aeromonas salmonicida (strain A449).